The sequence spans 202 residues: Protein GrpE (202 aa).

Basic and acidic residues predominate over residues 21-37 (EELKNEEVKEETHEHEH). The tract at residues 21–52 (EELKNEEVKEETHEHEHKHGGHTCCGKHGHKH) is disordered. Over residues 38–51 (KHGGHTCCGKHGHK) the composition is skewed to basic residues.

Belongs to the GrpE family. Homodimer.

Its subcellular location is the cytoplasm. In terms of biological role, participates actively in the response to hyperosmotic and heat shock by preventing the aggregation of stress-denatured proteins, in association with DnaK and GrpE. It is the nucleotide exchange factor for DnaK and may function as a thermosensor. Unfolded proteins bind initially to DnaJ; upon interaction with the DnaJ-bound protein, DnaK hydrolyzes its bound ATP, resulting in the formation of a stable complex. GrpE releases ADP from DnaK; ATP binding to DnaK triggers the release of the substrate protein, thus completing the reaction cycle. Several rounds of ATP-dependent interactions between DnaJ, DnaK and GrpE are required for fully efficient folding. This Fusobacterium nucleatum subsp. polymorphum (Fusobacterium polymorphum) protein is Protein GrpE.